We begin with the raw amino-acid sequence, 131 residues long: D-ribose pyranase (131 aa).

Residue His20 is the Proton donor of the active site. Residues Asp28, His98, and 120–122 contribute to the substrate site; that span reads YAN.

This sequence belongs to the RbsD / FucU family. RbsD subfamily. Homodecamer.

It is found in the cytoplasm. It catalyses the reaction beta-D-ribopyranose = beta-D-ribofuranose. The protein operates within carbohydrate metabolism; D-ribose degradation; D-ribose 5-phosphate from beta-D-ribopyranose: step 1/2. Catalyzes the interconversion of beta-pyran and beta-furan forms of D-ribose. This chain is D-ribose pyranase, found in Bacillus mycoides (strain KBAB4) (Bacillus weihenstephanensis).